Reading from the N-terminus, the 436-residue chain is MQPVVETLSGLERRVDLAISVADVEKEVQAQLKRVARTAKVPGFRPGKAPMAMLERSHGPSVRYDVINSQVARAFEQAVEAAQLRVAGSPSLEPKTEGVDENTLAFSATFEVYPEVAVPDLSDLAVTRYETEVTDAEVDKTLDVLRKQRASYETREGRAAQDDDRIVLDFAGTIDGVPFEGGKAENFPFILGQGRMLPEFEEAARGLKAGDTKVFPLSFPEDYQGKEVAGKTAEFTITVKEVAEAVLPVVDAEFAKSLGQADADVEKLKADIRGNIEREVKVRSQGRTKTSVMDALVEAAKFDVPKSLVDNDVQGRIAQAREELKQRGVPNADSMPMPAEVFAVESERRVRLGLLVSELVKQQQLQAKPEQVRARIEEFAQNYEQPAQVVSYYLSDRQRRAEIEAIVLEDNVVAYVLEKAKVTDEKVPFDQLMGMA.

A PPIase FKBP-type domain is found at 163 to 248 (DDRIVLDFAG…VKEVAEAVLP (86 aa)).

The protein belongs to the FKBP-type PPIase family. Tig subfamily.

It is found in the cytoplasm. It catalyses the reaction [protein]-peptidylproline (omega=180) = [protein]-peptidylproline (omega=0). Functionally, involved in protein export. Acts as a chaperone by maintaining the newly synthesized protein in an open conformation. Functions as a peptidyl-prolyl cis-trans isomerase. The polypeptide is Trigger factor (Bordetella avium (strain 197N)).